A 162-amino-acid chain; its full sequence is UPF0262 protein HNE_1347 (162 aa).

Belongs to the UPF0262 family.

The protein is UPF0262 protein HNE_1347 of Hyphomonas neptunium (strain ATCC 15444).